The primary structure comprises 271 residues: Phosphate import ATP-binding protein PstB (271 aa).

The 242-residue stretch at 25–266 folds into the ABC transporter domain; sequence VDVRQLSLWY…PKHPYTEAYI (242 aa). 57-64 contacts ATP; sequence GPSGCGKS.

This sequence belongs to the ABC transporter superfamily. Phosphate importer (TC 3.A.1.7) family. In terms of assembly, the complex is composed of two ATP-binding proteins (PstB), two transmembrane proteins (PstC and PstA) and a solute-binding protein (PstS).

It localises to the cell inner membrane. It catalyses the reaction phosphate(out) + ATP + H2O = ADP + 2 phosphate(in) + H(+). Its function is as follows. Part of the ABC transporter complex PstSACB involved in phosphate import. Responsible for energy coupling to the transport system. The sequence is that of Phosphate import ATP-binding protein PstB from Thermus thermophilus (strain ATCC BAA-163 / DSM 7039 / HB27).